Here is a 691-residue protein sequence, read N- to C-terminus: Elongation factor G (691 aa).

Residues 8–282 enclose the tr-type G domain; it reads ERVRNIGIAA…AVVNYLPAPV (275 aa). Residues 17 to 24, 81 to 85, and 135 to 138 each bind GTP; these read AHIDAGKT, DTPGH, and NKMD.

This sequence belongs to the TRAFAC class translation factor GTPase superfamily. Classic translation factor GTPase family. EF-G/EF-2 subfamily.

Its subcellular location is the cytoplasm. Catalyzes the GTP-dependent ribosomal translocation step during translation elongation. During this step, the ribosome changes from the pre-translocational (PRE) to the post-translocational (POST) state as the newly formed A-site-bound peptidyl-tRNA and P-site-bound deacylated tRNA move to the P and E sites, respectively. Catalyzes the coordinated movement of the two tRNA molecules, the mRNA and conformational changes in the ribosome. This chain is Elongation factor G, found in Prochlorococcus marinus (strain NATL2A).